A 347-amino-acid polypeptide reads, in one-letter code: Protein RecA (347 aa).

66 to 73 (GPESSGKT) lines the ATP pocket.

This sequence belongs to the RecA family.

The protein localises to the cytoplasm. Its function is as follows. Can catalyze the hydrolysis of ATP in the presence of single-stranded DNA, the ATP-dependent uptake of single-stranded DNA by duplex DNA, and the ATP-dependent hybridization of homologous single-stranded DNAs. It interacts with LexA causing its activation and leading to its autocatalytic cleavage. The polypeptide is Protein RecA (Methylococcus capsulatus (strain ATCC 33009 / NCIMB 11132 / Bath)).